The sequence spans 80 residues: NAD(P)H-quinone oxidoreductase subunit O (80 aa).

This sequence belongs to the complex I NdhO subunit family. In terms of assembly, NDH-1 can be composed of about 15 different subunits; different subcomplexes with different compositions have been identified which probably have different functions.

It is found in the cellular thylakoid membrane. It carries out the reaction a plastoquinone + NADH + (n+1) H(+)(in) = a plastoquinol + NAD(+) + n H(+)(out). It catalyses the reaction a plastoquinone + NADPH + (n+1) H(+)(in) = a plastoquinol + NADP(+) + n H(+)(out). NDH-1 shuttles electrons from an unknown electron donor, via FMN and iron-sulfur (Fe-S) centers, to quinones in the respiratory and/or the photosynthetic chain. The immediate electron acceptor for the enzyme in this species is believed to be plastoquinone. Couples the redox reaction to proton translocation, and thus conserves the redox energy in a proton gradient. Cyanobacterial NDH-1 also plays a role in inorganic carbon-concentration. The chain is NAD(P)H-quinone oxidoreductase subunit O from Prochlorococcus marinus (strain MIT 9515).